We begin with the raw amino-acid sequence, 468 residues long: Acid phosphatase PHO1 (468 aa).

Positions 1–22 are cleaved as a signal peptide; that stretch reads MFSPILSLEIILALATLQSVFA. Residue histidine 84 is the Nucleophile of the active site. N-linked (GlcNAc...) asparagine glycans are attached at residues asparagine 163, asparagine 196, asparagine 256, and asparagine 321. Aspartate 346 functions as the Proton donor in the catalytic mechanism. Asparagine 360 and asparagine 453 each carry an N-linked (GlcNAc...) asparagine glycan.

This sequence belongs to the histidine acid phosphatase family.

It catalyses the reaction a phosphate monoester + H2O = an alcohol + phosphate. The chain is Acid phosphatase PHO1 (PHO1) from Komagataella pastoris (Yeast).